The primary structure comprises 123 residues: Large ribosomal subunit protein bL17 (123 aa).

It belongs to the bacterial ribosomal protein bL17 family. In terms of assembly, part of the 50S ribosomal subunit. Contacts protein L32.

This chain is Large ribosomal subunit protein bL17, found in Mycoplasma genitalium (strain ATCC 33530 / DSM 19775 / NCTC 10195 / G37) (Mycoplasmoides genitalium).